Reading from the N-terminus, the 340-residue chain is Ketol-acid reductoisomerase (NADP(+)) (340 aa).

The KARI N-terminal Rossmann domain maps to 3 to 182; that stretch reads VQMEYEKDVK…GAARVGLLET (180 aa). NADP(+) is bound by residues 26–29, Arg-49, Ser-53, and 83–86; these read YGSQ and DEIQ. His-108 is a catalytic residue. Residue Gly-134 participates in NADP(+) binding. One can recognise a KARI C-terminal knotted domain in the interval 183–328; sequence TYKEETEEDL…AELRKAMPFV (146 aa). Mg(2+) contacts are provided by Asp-191, Glu-195, Glu-227, and Glu-231. Ser-252 is a substrate binding site.

Belongs to the ketol-acid reductoisomerase family. Requires Mg(2+) as cofactor.

It carries out the reaction (2R)-2,3-dihydroxy-3-methylbutanoate + NADP(+) = (2S)-2-acetolactate + NADPH + H(+). The enzyme catalyses (2R,3R)-2,3-dihydroxy-3-methylpentanoate + NADP(+) = (S)-2-ethyl-2-hydroxy-3-oxobutanoate + NADPH + H(+). It participates in amino-acid biosynthesis; L-isoleucine biosynthesis; L-isoleucine from 2-oxobutanoate: step 2/4. It functions in the pathway amino-acid biosynthesis; L-valine biosynthesis; L-valine from pyruvate: step 2/4. Functionally, involved in the biosynthesis of branched-chain amino acids (BCAA). Catalyzes an alkyl-migration followed by a ketol-acid reduction of (S)-2-acetolactate (S2AL) to yield (R)-2,3-dihydroxy-isovalerate. In the isomerase reaction, S2AL is rearranged via a Mg-dependent methyl migration to produce 3-hydroxy-3-methyl-2-ketobutyrate (HMKB). In the reductase reaction, this 2-ketoacid undergoes a metal-dependent reduction by NADPH to yield (R)-2,3-dihydroxy-isovalerate. The protein is Ketol-acid reductoisomerase (NADP(+)) of Streptococcus thermophilus (strain CNRZ 1066).